Consider the following 2432-residue polypeptide: MAAKVHVDIEADSPFIKSLQKAFPSFEVESLQVTPNDHANARAFSHLATKLIEQETDKDTLILDIGSAPSRRMMSTHKYHCVCPMRSAEDPERLVCYAKKLAAASGKVLDREIAGKITDLQTVMATPDAESPTFCLHTDVTCRTAAEVAVYQDVYAVHAPTSLYHQAMKGVRTAYWIGFDTTPFMFDALAGAYPTYATNWADEQVLQARNIGLCAASLTEGRLGKLSILRKKQLKPCDTVMFSVGSTLYTESRKLLRSWHLPSVFHLKGKQSFTCRCDTIVSCEGYVVKKITMCPGLYGKTVGYAVTYHAEGFLVCKTTDTVKGERVSFPVCTYVPSTICDQMTGILATDVTPEDAQKLLVGLNQRIVVNGRTQRNTNTMKNYLLPIVAVAFSKWAREYKADLDDEKPLGVRERSLTCCCLWAFKTRKMHTMYKKPDTQTIVKVPSEFNSFVIPSLWSTGLAIPVRSRIKMLLAKKTKRELIPVLDASSARDAEQEEKERLEAELTREALPPLVPIAPAETGVVDVDVEELEYHAGAGVVETPRSALKVTAQPNDVLLGNYVVLSPQTVLKSSKLAPVHPLAEQVKIITHNGRAGRYQVDGYDGRVLLPCGSAIPVPEFQALSESATMVYNEREFVNRKLYHIAVHGPSLNTDEENYEKVRAERTDAEYVFDVDKKCCVKREEASGLVLVGELTNPPFHEFAYEGLKIRPSAPYKTTVVGVFGVPGSGKSAIIKSLVTKHDLVTSGKKENCQEIVNDVKKHRGLDIQAKTVDSILLNGCRRAVDILYVDEAFACHSGTLLALIALVKPRSKVVLCGDPKQCGFFNMMQLKVNFNHNICTEVCHKSISRRCTRPVTAIVSTLHYGGKMRTTNPCNKPIIIDTTGQTKPKPGDIVLTCFRGWVKQLQLDYRGHEVMTAAASQGLTRKGVYAVRQKVNENPLYAPASEHVNVLLTRTEDRLVWKTLAGDPWIKVLSNIPQGNFTATLEEWQEEHDKIMKVIEGPAAPVDAFQNKANVCWAKSLVPVLDTAGIRLTAEEWSTIITAFKEDRAYSPVVALNEICTKYYGVDLDSGLFSAPKVSLYYENNHWDNRPGGRMYGFNAATAARLEARHTFLKGQWHTGKQAVIAERKIQPLSVLDNVIPINRRLPHALVAEYKTVKGSRVEWLVNKVRGYHVLLVSEYNLALPRRRVTWLSPLNVTGADRCYDLSLGLPADAGRFDLVFVNIHTEFRIHHYQQCVDHAMKLQMLGGDALRLLKPGGSLLMRAYGYADKISEAVVSSLSRKFSSARVLRPDCVTSNTEVFLLFSNFDNGKRPSTLHQMNTKLSAVYAGEAMHTAGCAPSYRVKRADIATCTEAAVVNAANARGTVGDGVCRAVAKKWPSAFKGAATPVGTIKTVMCGSYPVIHAVAPNFSATTEAEGDRELAAVYRAVAAEVNRLSLSSVAIPLLSTGVFSGGRDRLQQSLNHLFTAMDATDADVTIYCRDKSWEKKIQEAIDMRTAVELLNDDVELTTDLVRVHPDSSLVGRKGYSTTDGSLYSYFEGTKFNQAAIDMAEILTLWPRLQEANEQICLYALGETMDNIRSKCPVNDSDSSTPPRTVPCLCRYAMTAERIARLRSHQVKSMVVCSSFPLPKYHVDGVQKVKCEKGLLFDPTVPSVVSPRKYAASTTDHSDRSLRGFDLDWTTDSSSTASDTMSLPSLQSCDIDSIYEPMAPIVVTADVHPEPAGIADLAADVHPEPADHVDLENPIPPPRPKRAAYLASRAAERPVPAPRKPTPAPRTAFRNKLPLTFGDFDEHEVDALASGITFGDFDDVLRLGRAGAYIFSSDTGSGHLQQKSVRQHNLQCAQLDAVEEEKMYPPKLDTEREKLLLLKMQMHPSEANKSRYQSRKVENMKATVVDRLTSGARLYTGADVGRIPTYAVRYPRPVYSPTVIERFSSPDVAIAACNEYLSRNYPTVASYQITDEYDAYLDMVDGSDSCLDRATFCPAKLRCYPKHHAYHQPTVRSAVPSPFQNTLQNVLAAATKRNCNVTQMRELPTMDSAVFNVECFKRYACSGEYWEEYAKQPIRITTENITTYVTKLKGPKAAALFAKTHNLVPLQEVPMDRFTVDMKRDVKVTPGTKHTEERPKVQVIQAAEPLATAYLCGIHRELVRRLNAVLRPNVHTLFDMSAEDFDAIIASHFHPGDPVLETDIASFDKSQDDSLALTGLMILEDLGVDQYLLDLIEAAFGEISSCHLPTGTRFKFGAMMKSGMFLTLFINTVLNITIASRVLEQRLTDSACAAFIGDDNIVHGVISDKLMAERCASWVNMEVKIIDAVMGEKPPYFCGGFIVFDSVTQTACRVSDPLKRLFKLGKPLTAEDKQDEDRRRALSDEVSKWFRTGLGAELEVALTSRYEVEGCKSILIAMATLARDIKAFKKLRGPVIHLYGGPRLVR.

The 232-residue stretch at 29–260 (ESLQVTPNDH…ESRKLLRSWH (232 aa)) folds into the Alphavirus-like MT domain. Positions 245–264 (GSTLYTESRKLLRSWHLPSV) are nsP1 membrane-binding. S-palmitoyl cysteine; by host attachment occurs at residues cysteine 418 and cysteine 420. Residues 692-844 (ELTNPPFHEF…HNICTEVCHK (153 aa)) enclose the (+)RNA virus helicase ATP-binding domain. Residue 723–730 (GVPGSGKS) participates in a ribonucleoside 5'-triphosphate binding. Positions 845-993 (SISRRCTRPV…LEEWQEEHDK (149 aa)) constitute a (+)RNA virus helicase C-terminal domain. The region spanning 1006–1329 (DAFQNKANVC…TKLSAVYAGE (324 aa)) is the Peptidase C9 domain. Residues 1007-1026 (AFQNKANVCWAKSLVPVLDT) form a nucleolus localization signal region. Residue cysteine 1015 is the For cysteine protease nsP2 activity of the active site. The Nuclear export signal signature appears at 1060–1069 (TKYYGVDLDS). Histidine 1085 acts as the For cysteine protease nsP2 activity in catalysis. A Nuclear localization signal motif is present at residues 1184 to 1188 (PRRRV). In terms of domain architecture, Macro spans 1337–1495 (APSYRVKRAD…KKIQEAIDMR (159 aa)). ADP-D-ribose is bound by residues aspartate 1346, asparagine 1360, glycine 1368, glycine 1448, valine 1449, and phenylalanine 1450. Residues cysteine 1598, cysteine 1600, cysteine 1623, and cysteine 1641 each coordinate Zn(2+). Residues threonine 1680 and threonine 1681 each carry the phosphothreonine; by host modification. The tract at residues 1759–1779 (RAAERPVPAPRKPTPAPRTAF) is disordered. Residues 1765–1774 (VPAPRKPTPA) show a composition bias toward pro residues. 2 consecutive short sequence motifs (FGDF; binding to host G3BP1) follow at residues 1787-1790 (FGDF) and 1804-1807 (FGDF). Positions 2182–2297 (GDPVLETDIA…VHGVISDKLM (116 aa)) constitute a RdRp catalytic domain.

As to quaternary structure, interacts with non-structural protein 3. Interacts with RNA-directed RNA polymerase nsP4. Interacts with protease nsP2. interacts with itself. In terms of assembly, interacts with mRNA-capping enzyme nsP1. Interacts with host DDX1. Interacts with host DDX3. Interacts (via C-terminus) with host G3BP1; this interaction inhibits the formation of host stress granules on viral mRNAs and the nsp3-G3BP1 complexes bind viral RNAs and probably orchestrate the assembly of viral replication complexes. Interacts (via C-terminus) with host G3BP2; this interaction inhibits the formation of host stress granules on viral mRNAs and the nsp3-G3BP2 complexes bind viral RNAs and probably orchestrate the assembly of viral replication complexes. Interacts with mRNA-capping enzyme nsP1. Interacts with protease nsP2. interacts with itself. As to quaternary structure, interacts with RNA-directed RNA polymerase nsP4. Interacts with mRNA-capping enzyme nsP1. Interacts with KPNA1/karyopherin-alpha1; this interaction probably allows the active transport of protease nsP2 into the host nucleus. It depends on Mg(2+) as a cofactor. Requires Mn(2+) as cofactor. Specific enzymatic cleavages in vivo yield mature proteins. The processing of the polyprotein is temporally regulated. In early stages (1.7 hpi), P1234 is first cleaved in trans through its nsP2 protease activity, releasing P123' and nsP4, which associate to form the early replication complex. At the same time, P1234 is also cut at the nsP1/nsP2 site early in infection but with lower efficiency. After replication of the viral minus-strand RNAs (4 hpi), the polyproteins are cut at the nsP1/nsP2 and nsP2/nsP3 sites very efficiently, preventing accumulation of P123' and P1234 and allowing the formation of the late replication complex. NsP3'/nsP4 site is not cleaved anymore and P34 is produced rather than nsP4. In terms of processing, specific enzymatic cleavages in vivo yield mature proteins. The processing of the polyprotein is temporally regulated. In early stages (1.7 hpi), P123' is cleaved at the nsP1/nsP2 site with low efficiency. After replication of the viral minus-strand RNAs (4 hpi), the polyproteins are cut at the nsP1/nsP2 and nsP2/nsP3 sites very efficiently, preventing accumulation of P123' and allowing the formation of the late replication complex. Post-translationally, specific enzymatic cleavages in vivo yield mature proteins. The processing of the polyprotein is temporally regulated. In early stages (1.7 hpi), P123 is cleaved at the nsP1/nsP2 site with low efficiency. After replication of the viral minus-strand RNAs (4 hpi), the polyproteins are cut at the nsP1/nsP2 and nsP2/nsP3 sites very efficiently, preventing accumulation of P123 and allowing the formation of the late replication complex. Palmitoylated by host palmitoyltransferases ZDHHC2 and ZDHHC19. In terms of processing, phosphorylated by host on serines and threonines. Post-translationally, ubiquitinated; targets the protein for rapid degradation via the ubiquitin system. Nsp4 is present in extremely low quantities due to low frequency of translation through the amber stop-codon and the degradation by the ubiquitin pathway.

It is found in the host cytoplasmic vesicle membrane. It localises to the host cell membrane. The protein resides in the host cell projection. Its subcellular location is the host filopodium. The protein localises to the host nucleus. It is found in the host cytoplasm. The enzyme catalyses GTP + S-adenosyl-L-methionine = N(7)-methyl-GTP + S-adenosyl-L-homocysteine. It catalyses the reaction N(7)-methyl-GTP + L-histidyl-[protein] = N(tele)-(N(7)-methylguanosine 5'-phospho)-L-histidyl-[protein] + diphosphate. It carries out the reaction N(tele)-(N(7)-methylguanosine 5'-phospho)-L-histidyl-[protein] + a 5'-end diphospho-(purine-ribonucleoside) in mRNA + H(+) = a 5'-end (N(7)-methyl 5'-triphosphoguanosine)-(purine-ribonucleoside) in mRNA + L-histidyl-[protein]. The catalysed reaction is a 5'-end triphospho-ribonucleoside in mRNA + H2O = a 5'-end diphospho-ribonucleoside in mRNA + phosphate + H(+). The enzyme catalyses a ribonucleoside 5'-triphosphate + H2O = a ribonucleoside 5'-diphosphate + phosphate + H(+). It catalyses the reaction ATP + H2O = ADP + phosphate + H(+). It carries out the reaction RNA(n) + a ribonucleoside 5'-triphosphate = RNA(n+1) + diphosphate. The catalysed reaction is RNA(n) + ATP = RNA(n)-3'-adenine ribonucleotide + diphosphate. The enzyme catalyses 4-O-(ADP-D-ribosyl)-L-aspartyl-[protein] + H2O = L-aspartyl-[protein] + ADP-D-ribose + H(+). It catalyses the reaction 5-O-(ADP-D-ribosyl)-L-glutamyl-[protein] + H2O = L-glutamyl-[protein] + ADP-D-ribose + H(+). It carries out the reaction ADP-alpha-D-ribose 1''-phosphate + H2O = ADP-D-ribose + phosphate. Inhibited by N-ethylmaleimide, Zn(2+), and Cu2(2+). Functionally, inactive precursor of the viral replicase, which is activated by cleavages carried out by the viral protease nsP2. Its function is as follows. The early replication complex formed by the polyprotein P123 and nsP4 synthesizes minus-strand RNAs. As soon P123 is cleaved into mature proteins, the plus-strand RNAs synthesis begins. The early replication complex formed by the polyprotein P123' and nsP4 synthesizes minus-strand RNAs. Polyprotein P123' is a short-lived polyprotein that accumulates during early stage of infection. As soon P123' is cleaved into mature proteins, the plus-strand RNAs synthesis begins. In terms of biological role, cytoplasmic capping enzyme that catalyzes two virus-specific reactions: methyltransferase and nsP1 guanylyltransferase. mRNA-capping is necessary since all viral RNAs are synthesized in the cytoplasm, and host capping enzymes are restricted to the nucleus. The enzymatic reaction involves a covalent link between 7-methyl-GMP and nsP1, whereas eukaryotic capping enzymes form a covalent complex only with GMP. nsP1 capping consists in the following reactions: GTP is first methylated into 7-methyl-GMP and then is covalently linked to nsP1 to form the m7GMp-nsP1 complex from which 7-methyl-GMP complex is transferred to the mRNA to create the cap structure. NsP1 is also needed for the initiation of the minus-strand RNAs synthesis. Probably serves as a membrane anchor for the replication complex composed of nsP1-nsP4. Palmitoylated nsP1 is remodeling host cell cytoskeleton, and induces filopodium-like structure formation at the surface of the host cell. Functionally, multifunctional protein whose N-terminus is part of the RNA polymerase complex and displays NTPase, RNA triphosphatase and helicase activities. NTPase and RNA triphosphatase are involved in viral RNA capping and helicase keeps a check on the dsRNA replication intermediates. The C-terminus harbors a protease that specifically cleaves and releases the mature proteins. Required for the shutoff of minus-strand RNAs synthesis. Specifically inhibits the host IFN response by promoting the nuclear export of host STAT1. Also inhibits host transcription by inducing rapid proteasome-dependent degradation of POLR2A, a catalytic subunit of the RNAPII complex. The resulting inhibition of cellular protein synthesis serves to ensure maximal viral gene expression and to evade host immune response. Its function is as follows. Seems to be essential for minus-strand RNAs and subgenomic 26S mRNAs synthesis. Displays mono-ADP-ribosylhydrolase activity. ADP-ribosylation is a post-translational modification that controls various processes of the host cell and the virus probably needs to revert it for optimal viral replication. Binds proteins of FXR family and sequesters them into the viral RNA replication complexes thereby inhibiting the formation of host stress granules on viral mRNAs. The nsp3'-FXR complexes bind viral RNAs and probably orchestrate the assembly of viral replication complexes, thanks to the ability of FXR family members to self-assemble and bind DNA. Seems to be essential for minus-strand RNAs and subgenomic 26S mRNAs synthesis. Displays mono-ADP-ribosylhydrolase activity. ADP-ribosylation is a post-translational modification that controls various processes of the host cell and the virus probably needs to revert it for optimal viral replication. Binds proteins of G3BP family and sequesters them into the viral RNA replication complexes thereby inhibiting the formation of host stress granules on viral mRNAs. The nsp3-G3BP complexes bind viral RNAs and probably orchestrate the assembly of viral replication complexes, thanks to the ability of G3BP family members to self-assemble and bind DNA. In terms of biological role, RNA dependent RNA polymerase. Replicates genomic and antigenomic RNA by recognizing replications specific signals. The early replication complex formed by the polyprotein P123 and nsP4 synthesizes minus-strand RNAs. The late replication complex composed of fully processed nsP1-nsP4 is responsible for the production of genomic and subgenomic plus-strand RNAs. The polypeptide is Polyprotein P1234 (Aedes (Middle-African hedgehog)).